The primary structure comprises 229 residues: Serine acetyltransferase (229 aa).

The protein belongs to the transferase hexapeptide repeat family.

It localises to the cytoplasm. The catalysed reaction is L-serine + acetyl-CoA = O-acetyl-L-serine + CoA. The protein operates within amino-acid biosynthesis; L-cysteine biosynthesis; L-cysteine from L-serine: step 1/2. Its function is as follows. Catalyzes the acetylation of serine by acetyl-CoA to produce O-acetylserine (OAS). The chain is Serine acetyltransferase (cysE) from Mycobacterium tuberculosis (strain ATCC 25618 / H37Rv).